A 66-amino-acid polypeptide reads, in one-letter code: Probable cytochrome b-c1 complex subunit 9 (66 aa).

The Mitochondrial matrix segment spans residues Met-1–Trp-20. Residues Met-21–Val-46 form a helical membrane-spanning segment. The Mitochondrial intermembrane segment spans residues Asn-47 to Gln-66.

This sequence belongs to the UQCR10/QCR9 family. In terms of assembly, component of the ubiquinol-cytochrome c oxidoreductase (cytochrome b-c1 complex, complex III, CIII), a multisubunit enzyme composed of 3 respiratory subunits cytochrome b, cytochrome c1 and Rieske protein, 2 core protein subunits, and additional low-molecular weight protein subunits. The complex exists as an obligatory dimer and forms supercomplexes (SCs) in the inner mitochondrial membrane with cytochrome c oxidase (complex IV, CIV).

It localises to the mitochondrion inner membrane. Component of the ubiquinol-cytochrome c oxidoreductase, a multisubunit transmembrane complex that is part of the mitochondrial electron transport chain which drives oxidative phosphorylation. The respiratory chain contains 3 multisubunit complexes succinate dehydrogenase (complex II, CII), ubiquinol-cytochrome c oxidoreductase (cytochrome b-c1 complex, complex III, CIII) and cytochrome c oxidase (complex IV, CIV), that cooperate to transfer electrons derived from NADH and succinate to molecular oxygen, creating an electrochemical gradient over the inner membrane that drives transmembrane transport and the ATP synthase. The cytochrome b-c1 complex catalyzes electron transfer from ubiquinol to cytochrome c, linking this redox reaction to translocation of protons across the mitochondrial inner membrane, with protons being carried across the membrane as hydrogens on the quinol. In the process called Q cycle, 2 protons are consumed from the matrix, 4 protons are released into the intermembrane space and 2 electrons are passed to cytochrome c. This is Probable cytochrome b-c1 complex subunit 9 from Dictyostelium discoideum (Social amoeba).